A 270-amino-acid chain; its full sequence is 5'-AMP-activated protein kinase subunit beta-1 (270 aa).

The tract at residues 1-46 (MGNTSSERAALERHGGHKTPRRDSSGGTKDGDRPKILMDSPEDADL) is disordered. Gly-2 is lipidated: N-myristoyl glycine. Position 4 is a phosphothreonine (Thr-4). Residues Ser-5 and Ser-6 each carry the phosphoserine modification. Thr-19 carries the post-translational modification Phosphothreonine. Residues 21–36 (RRDSSGGTKDGDRPKI) show a composition bias toward basic and acidic residues. Residues Ser-24 and Ser-25 each carry the phosphoserine; by autocatalysis modification. Ser-40, Ser-96, and Ser-101 each carry phosphoserine. Positions 68–163 (EVNDKAPAQA…QVKKTDFEVF (96 aa)) are glycogen-binding domain. Residue Ser-108 is modified to Phosphoserine; by autocatalysis. Thr-148 carries the phosphothreonine modification. Ser-182 is subject to Phosphoserine.

Belongs to the 5'-AMP-activated protein kinase beta subunit family. AMPK is a heterotrimer of an alpha catalytic subunit (PRKAA1 or PRKAA2), a beta (PRKAB1 or PRKAB2) and a gamma non-catalytic subunits (PRKAG1, PRKAG2 or PRKAG3). Interacts with FNIP1 and FNIP2. Phosphorylated when associated with the catalytic subunit (PRKAA1 or PRKAA2). Phosphorylated by ULK1; leading to negatively regulate AMPK activity and suggesting the existence of a regulatory feedback loop between ULK1 and AMPK.

In terms of biological role, non-catalytic subunit of AMP-activated protein kinase (AMPK), an energy sensor protein kinase that plays a key role in regulating cellular energy metabolism. In response to reduction of intracellular ATP levels, AMPK activates energy-producing pathways and inhibits energy-consuming processes: inhibits protein, carbohydrate and lipid biosynthesis, as well as cell growth and proliferation. AMPK acts via direct phosphorylation of metabolic enzymes, and by longer-term effects via phosphorylation of transcription regulators. Also acts as a regulator of cellular polarity by remodeling the actin cytoskeleton; probably by indirectly activating myosin. Beta non-catalytic subunit acts as a scaffold on which the AMPK complex assembles, via its C-terminus that bridges alpha (PRKAA1 or PRKAA2) and gamma subunits (PRKAG1, PRKAG2 or PRKAG3). In Pongo abelii (Sumatran orangutan), this protein is 5'-AMP-activated protein kinase subunit beta-1 (PRKAB1).